The primary structure comprises 523 residues: Synaptotagmin-10 (523 aa).

Topologically, residues 1 to 55 (MSFRKEDGVSSLCQKALHIITELCFAGQVEWDKCSGIFPADRSGQGGGGTDISVS) are vesicular. A cysteine motif region spans residues 13 to 35 (CQKALHIITELCFAGQVEWDKCS). A helical transmembrane segment spans residues 56–76 (LLAVVVSFCGLALLVVSLFVF). The Cytoplasmic segment spans residues 77 to 523 (WKLCWPCWKS…CSSPRPPSTP (447 aa)). Position 136 is a phosphothreonine (threonine 136). 2 consecutive C2 domains span residues 231–352 (TCGK…TVWK) and 363–496 (DLGE…THWH). Ca(2+) is bound by residues aspartate 262, aspartate 268, aspartate 320, phenylalanine 321, aspartate 322, serine 325, aspartate 328, aspartate 394, aspartate 400, aspartate 454, and aspartate 456.

It belongs to the synaptotagmin family. In terms of assembly, homodimer; disulfide-linked via the cysteine motif. Can also form heterodimers with SYT3, SYT6, SYT7 and SYT9. Ca(2+) serves as cofactor.

The protein resides in the cytoplasmic vesicle. It is found in the secretory vesicle membrane. In terms of biological role, ca(2+) sensor specifically required for the Ca(2+)-dependent exocytosis of secretory vesicles containing IGF1 in neurons of the olfactory bulb. Exocytosis of IGF1 is required for sensory perception of smell. Not involved in Ca(2+)-dependent synaptic vesicle exocytosis. Acts through Ca(2+) and phospholipid binding to the C2 domain: Ca(2+) induces binding of the C2-domains to phospholipid membranes and to assembled SNARE-complexes; both actions contribute to triggering exocytosis. The chain is Synaptotagmin-10 (Syt10) from Rattus norvegicus (Rat).